Reading from the N-terminus, the 64-residue chain is Conotoxin Ts-011 (64 aa).

The signal sequence occupies residues 1–22 (MHCLPVLVILLLLIASTPSVDA). The propeptide occupies 23-52 (RPKTKDDVPPASFHGADDANRILQTLWNLR). An Isoleucine amide modification is found at isoleucine 63.

Belongs to the conotoxin T superfamily. Post-translationally, contains 2 disulfide bonds that can be either 'C1-C3, C2-C4' or 'C1-C4, C2-C3', since these disulfide connectivities have been observed for conotoxins with cysteine framework V (for examples, see AC P0DQQ7 and AC P81755). Expressed by the venom duct.

The protein resides in the secreted. The sequence is that of Conotoxin Ts-011 from Conus tessulatus (Tessellate cone).